We begin with the raw amino-acid sequence, 326 residues long: Tetraketide alpha-pyrone reductase 1 (326 aa).

Residues 8-32 (VCVT…GYEV), K44, and Y162 each bind NADP(+).

The protein belongs to the NAD(P)-dependent epimerase/dehydratase family. Dihydroflavonol-4-reductase subfamily. As to quaternary structure, interacts with 4CLL1/ACOS5, PKSA and PKSB. Specifically expressed in anther tapetal cells during microspores development.

The protein resides in the cytoplasm. Its subcellular location is the nucleus. It localises to the endoplasmic reticulum. Involved in the biosynthesis of hydroxylated tetraketide compounds that serve as sporopollenin precursors (the main constituents of exine). Is essential for pollen wall development. Acts on tetraketide alpha-pyrones and reduces the carbonyl function on the tetraketide alkyl chain to a secondary alcohol function. The sequence is that of Tetraketide alpha-pyrone reductase 1 (TKPR1) from Arabidopsis thaliana (Mouse-ear cress).